A 1843-amino-acid polypeptide reads, in one-letter code: Protein TIC 214 (1843 aa).

6 helical membrane passes run 18-38 (IINSVVVVGLYYGFLTTFSIG), 64-84 (FITGQLMMFISIYYAPLHLAL), 87-107 (PHTITVLVLPYLLFHFFWNNH), 124-144 (LSIQCVFLNNLIFQLFNHFIL), 172-192 (VGWLIGHILFMKWVGLVLFWI), and 217-237 (IFSILLFITCVYYLGRIPSPI). Disordered stretches follow at residues 244-281 (ETSKTEEREESEEETDVEIETTSETKGTKQEQEGAAEK), 557-576 (EEIENDEESKPDHGIRSRKA), 582-647 (FTDN…DEVA), 724-744 (NSEEEDTKEKEKKREEKRQEN), and 1527-1586 (SLEL…KKKK). Positions 251-264 (REESEEETDVEIET) are enriched in acidic residues. Basic and acidic residues predominate over residues 269–281 (KGTKQEQEGAAEK). A compositionally biased stretch (low complexity) spans 590 to 639 (NTPTSTTETTSTAETTSTTETTSTTKNTSTTKNTSTTETTSTTENENTSN). 2 stretches are compositionally biased toward basic and acidic residues: residues 730–744 (TKEKEKKREEKRQEN) and 1527–1540 (SLELKNKEEKKKPA). Residues 1543-1562 (NIGSDTQKQGNPGSDPSTQQ) are compositionally biased toward polar residues. The span at 1563–1580 (KDIKKNVKEDYDGRSDIQ) shows a compositional bias: basic and acidic residues.

This sequence belongs to the TIC214 family. Part of the Tic complex.

The protein localises to the plastid. It is found in the chloroplast inner membrane. Its function is as follows. Involved in protein precursor import into chloroplasts. May be part of an intermediate translocation complex acting as a protein-conducting channel at the inner envelope. The protein is Protein TIC 214 of Nandina domestica (Heavenly bamboo).